The chain runs to 154 residues: Large ribosomal subunit protein uL13 (154 aa).

The protein belongs to the universal ribosomal protein uL13 family. Part of the 50S ribosomal subunit.

Functionally, this protein is one of the early assembly proteins of the 50S ribosomal subunit, although it is not seen to bind rRNA by itself. It is important during the early stages of 50S assembly. In Mesorhizobium japonicum (strain LMG 29417 / CECT 9101 / MAFF 303099) (Mesorhizobium loti (strain MAFF 303099)), this protein is Large ribosomal subunit protein uL13.